The primary structure comprises 378 residues: MPTLRRLDISEFRNLRSATLQPGEGINLISGENGSGKTSILESISVLAHGRSFRTHKFRRLINNDEKSFTLFGQIFEGTTRNIGLSRASNGDIQIRIDSKAAHTATELAECLPLLVMNSASFQLLEGSGQVRRKFFDWLVFHVKQEFKHYWKLYARCIKQRNSLLRRDKITRSELLPWDQELTKAAQHIESMRSEVFELFQTHFLNEIGQFDFTETLGAELSCTYVSGWSKTGNYNEQLEDQFERDVAAGYTHIGSHKSDVKINLARVPAVEELSRGQQKSVIVALFLAEALVFRTTTGRTPVFLLDDLPAELDEKNLRIVGKALKNLGSQVFATAIDPKSILTGWELVDDESLRMFHVKHGQVELKNDITLRDSFLL.

Residue 31–38 (GENGSGKT) coordinates ATP.

It belongs to the RecF family.

Its subcellular location is the cytoplasm. The RecF protein is involved in DNA metabolism; it is required for DNA replication and normal SOS inducibility. RecF binds preferentially to single-stranded, linear DNA. It also seems to bind ATP. In Teredinibacter turnerae (strain ATCC 39867 / T7901), this protein is DNA replication and repair protein RecF.